We begin with the raw amino-acid sequence, 494 residues long: Putative NAD kinase 3 (494 aa).

The protein belongs to the NAD kinase family.

It catalyses the reaction NAD(+) + ATP = ADP + NADP(+) + H(+). In Oryza sativa subsp. japonica (Rice), this protein is Putative NAD kinase 3.